The chain runs to 56 residues: Small ribosomal subunit protein uS14 (56 aa).

The Zn(2+) site is built by Cys21, Cys24, Cys39, and Cys42.

It belongs to the universal ribosomal protein uS14 family. Component of the 40S small ribosomal subunit. Zn(2+) serves as cofactor.

The protein resides in the cytoplasm. Its subcellular location is the cytosol. It localises to the rough endoplasmic reticulum. This chain is Small ribosomal subunit protein uS14 (RpS29), found in Lysiphlebus testaceipes (Greenbugs aphid parastoid).